The primary structure comprises 1348 residues: MMVLEGASALSPFRRARLETRLQTLVPALRLTGAWHVYFIRADAGRTPDQATLQRILQAEPAPAPRDEAASSRYVVPRLGTLSPWSSKATELMRGAGQPIQRVERGTRIDLAGWPEGEADQAAVAKLLHDPMTQSLLGSAAAAEALFNVPDPGQLERIPLDALEQANGDLGLALAQDEIDYLRERFAALGRDPADVELMMFAQANSEHCRHKIFNASWTIDGKPQERSLFRMIKHTHQQTPQHTLSAYSDNAAVVEGVPAARFRPDPATGEYRSEAVVPSAFAIKVETHNHPTAIAPFPGAATGAGGEIRDEGATGRGGKPKAGLTGFSVSHLRIPTLPQPWEAPRALNPRMAPALDIMLDGPLGGAAFNNEFGRPNLLGYFRSFELAEGQGLTRAYDKPIMLAGGLGAIDRNQVEKLRLQPGDAVIVLGGPAMLIGLGGGAASSVAAGDSAEALDFASVQRENPEMERRCQEVIDHCVALGTDNPIRWFHDVGAGGLSNAIPELLHDSGVGGVIDLARVPSDDPSLSPLELWCNESQERYVLGVPQARLDEFAAICARERCPFAAVGVATAEERLVVGYGVFDAANRESGIGNRNSALPAAEAASAHSLFPTPDSPLPINLPMDVLFGKAPKMHRDAVHPAAPQWPVLQTGALDLQEAGLRVLAHPTVASKSFLVTIGDRSVGGLTAREQMIGPWQLPLADCAITLAGFETFDGEAMSIGERTPLALLNAAASARMAVGEAITNLCAAPVQTLDSIKLSANWMAAAGHAGEDALLYDAVRAVGMELCPALELSIPVGKDSLSMQAQWQVGNGESGIGNGETPAPSASAIPDSRLPIPGETLKSVSPVSLIISAFAPVSDVRTQLTPLLQREDESELWLIGLGGGKQRLGGSVLAQVYADDSALPAFGGETPDLDDPQRLRQFFELIRDAREGGLLLAYHDRSDGGAFAALCEMAFASRQGLDITLDAWGDDAFRSLFNEELGAVVQIANEDRAAFADLVERHALTECAQRIARPTGTPRVRVSGQGRVLAEWRWEALFDAWWSVTHAMQKLRDNPDSADEERAVARNFQAPGLRPKLVFDPSEDVAAPFVATGARPKVAILREQGVNGQIEMAYNFERAGFRAFDVHMSDLIEGRVDLAQFAGFAACGGFSYGDVLGAGRGWATSILERAALRDAFAAFFARSDTFALGVCNGCQMLSQLKDIIPGAEHWPRFLRNRSEQFEARTALLEVVESPSILLRGMAGSRIPVAVAHGEGRAEFDTAVDQAAARVALRFIDGDGAVASQYPLNPNGSPDGITGLTSTDGRATILMPHPERTPRSVNLSWHPAGWGEDSPWLRMFRNARVWCG.

ATP contacts are provided by residues 300–311 (GAATGAGGEIRD) and A701. Mg(2+)-binding residues include D702, E741, N745, and D941. An ATP-binding site is contributed by S943. Residues 1099-1348 (VAILREQGVN…MFRNARVWCG (250 aa)) enclose the Glutamine amidotransferase type-1 domain. Catalysis depends on C1192, which acts as the Nucleophile. Catalysis depends on residues H1313 and E1315.

This sequence in the N-terminal section; belongs to the FGAMS family. As to quaternary structure, monomer.

Its subcellular location is the cytoplasm. The catalysed reaction is N(2)-formyl-N(1)-(5-phospho-beta-D-ribosyl)glycinamide + L-glutamine + ATP + H2O = 2-formamido-N(1)-(5-O-phospho-beta-D-ribosyl)acetamidine + L-glutamate + ADP + phosphate + H(+). It participates in purine metabolism; IMP biosynthesis via de novo pathway; 5-amino-1-(5-phospho-D-ribosyl)imidazole from N(2)-formyl-N(1)-(5-phospho-D-ribosyl)glycinamide: step 1/2. Phosphoribosylformylglycinamidine synthase involved in the purines biosynthetic pathway. Catalyzes the ATP-dependent conversion of formylglycinamide ribonucleotide (FGAR) and glutamine to yield formylglycinamidine ribonucleotide (FGAM) and glutamate. The sequence is that of Phosphoribosylformylglycinamidine synthase from Xanthomonas campestris pv. campestris (strain ATCC 33913 / DSM 3586 / NCPPB 528 / LMG 568 / P 25).